A 415-amino-acid polypeptide reads, in one-letter code: F-box protein ETP1 (415 aa).

The F-box domain maps to 1–46 (MTIPDLCNDLVDEILCRVPARNLKRLRSTSKRWNRLFKDDRRFARE).

Interacts with EIN2 (via C-terminus).

Its function is as follows. Negative regulator of EIN2 protein stability. The protein is F-box protein ETP1 of Arabidopsis thaliana (Mouse-ear cress).